The primary structure comprises 296 residues: D-alanine--D-alanine ligase (296 aa).

The ATP-grasp domain occupies 103–293 (KEILMHHRMP…FDSFVKRIIE (191 aa)). Position 129-180 (129-180 (ISFPVAVKPSSGGSSIATFKVKSIQELKHAYEEASKYGEVMIEQWVTGKEIT)) interacts with ATP. Mg(2+) contacts are provided by D247, E260, and N262.

This sequence belongs to the D-alanine--D-alanine ligase family. Mg(2+) serves as cofactor. Mn(2+) is required as a cofactor.

It is found in the cytoplasm. The catalysed reaction is 2 D-alanine + ATP = D-alanyl-D-alanine + ADP + phosphate + H(+). The protein operates within cell wall biogenesis; peptidoglycan biosynthesis. Cell wall formation. This is D-alanine--D-alanine ligase from Francisella tularensis subsp. tularensis (strain FSC 198).